Here is a 215-residue protein sequence, read N- to C-terminus: Probable phosphoglycerate mutase GpmB (215 aa).

Residues 8–15 (RHGETQWN), 21–22 (QG), arginine 58, arginine 60, 82–85 (ELDM), 104–105 (RR), and 151–152 (GI) each bind substrate. Catalysis depends on histidine 9, which acts as the Tele-phosphohistidine intermediate. Residue glutamate 82 is the Proton donor/acceptor of the active site.

It belongs to the phosphoglycerate mutase family. GpmB subfamily.

It catalyses the reaction (2R)-2-phosphoglycerate = (2R)-3-phosphoglycerate. It participates in carbohydrate degradation; glycolysis; pyruvate from D-glyceraldehyde 3-phosphate: step 3/5. The sequence is that of Probable phosphoglycerate mutase GpmB from Citrobacter koseri (strain ATCC BAA-895 / CDC 4225-83 / SGSC4696).